The primary structure comprises 197 residues: Allatostatins (197 aa).

An N-terminal signal peptide occupies residues 1–27 (MRSRTSVLTSSLAFLYFFGIVGRSALA). The propeptide occupies 28-56 (MEETPASSMNLQHYNNMLNPMVFDDTMPE). Ile-76 carries the isoleucine amide modification. The propeptide occupies 80–86 (WIDTNDN). Leucine amide is present on residues Leu-96, Leu-106, Leu-154, and Leu-184. The tract at residues 161-197 (YSGGQPLGSKRPNDMLSQRYHFGLGKRMSEDEEESSQ) is disordered. Residues 188–197 (MSEDEEESSQ) constitute a propeptide that is removed on maturation.

The protein belongs to the allatostatin family.

Its subcellular location is the secreted. Neuropeptides. The protein is Allatostatins of Apis mellifera (Honeybee).